Here is a 1162-residue protein sequence, read N- to C-terminus: Glycerophosphocholine phosphodiesterase GDE1 (1162 aa).

Positions 1 to 155 (MKFGKTYVTH…TSILSQHSGV (155 aa)) constitute an SPX domain. ANK repeat units follow at residues 346–375 (YHRT…KWGL), 392–421 (EGLT…AQTL), 423–452 (CPNL…DVNY), 458–487 (RNET…NTEI), 492–521 (FGWT…SYDI), and 525–554 (SGWL…KLLL). The 330-residue stretch at 817–1146 (TRVIGHRGLG…DSVLAVREGL (330 aa)) folds into the GP-PDE domain.

It belongs to the GDE1 family.

The protein resides in the cytoplasm. The catalysed reaction is sn-glycerol 3-phosphocholine + H2O = sn-glycerol 3-phosphate + choline + H(+). In terms of biological role, glycerophosphocholine glycerophosphodiesterase responsible for the hydrolysis of intracellular glycerophosphocholine into glycerol-phosphate and choline. The choline is used for phosphatidyl-choline synthesis. Required for utilization of glycerophosphocholine as phosphate source. C.albicans can utilize GroPCho through transport and intracellular hydrolysis or through extracellular hydrolysis. The chain is Glycerophosphocholine phosphodiesterase GDE1 from Candida albicans (strain SC5314 / ATCC MYA-2876) (Yeast).